Here is a 273-residue protein sequence, read N- to C-terminus: MKRFSDLNQIDISKLEVFFQPAKKTKKQTVVFAHGFSVFHSYFQSFYKTLTDYDYYAPLWPGHNVNGFDYKELSPIHYGELLAAFIENKDLENIVLIGHSMGAAVCSYAMNLLNAKRVEKLILLAPLSYCNLLRYFKIKSSFKKDKAERMANFKAMFQTKFSNLTDENSWENELSKHSKMAKKLSNNILKELPVLNKTYKNLKLPVFLVLAQNDLFMPTKLTLSYFNKYLIKNNNLQSSVILNSEHQMFNSKYESFCKAMDDILNHNKLSKIY.

His34 is an active-site residue. The active-site Charge relay system is the Ser100.

This sequence belongs to the lipase/esterase LIP3/BchO family.

This is Putative esterase/lipase 3 from Mycoplasma genitalium (strain ATCC 33530 / DSM 19775 / NCTC 10195 / G37) (Mycoplasmoides genitalium).